We begin with the raw amino-acid sequence, 304 residues long: Ribonuclease Z (304 aa).

Residues H61, H63, D65, H66, H138, D206, and H265 each contribute to the Zn(2+) site. D65 functions as the Proton acceptor in the catalytic mechanism.

It belongs to the RNase Z family. In terms of assembly, homodimer. It depends on Zn(2+) as a cofactor.

It catalyses the reaction Endonucleolytic cleavage of RNA, removing extra 3' nucleotides from tRNA precursor, generating 3' termini of tRNAs. A 3'-hydroxy group is left at the tRNA terminus and a 5'-phosphoryl group is left at the trailer molecule.. Zinc phosphodiesterase, which displays some tRNA 3'-processing endonuclease activity. Probably involved in tRNA maturation, by removing a 3'-trailer from precursor tRNA. This chain is Ribonuclease Z, found in Lachnoclostridium phytofermentans (strain ATCC 700394 / DSM 18823 / ISDg) (Clostridium phytofermentans).